Reading from the N-terminus, the 196-residue chain is Imidazole glycerol phosphate synthase subunit HisH (196 aa).

The Glutamine amidotransferase type-1 domain maps to 2-196 (KVAVIKYNAG…ERIIKNFLEL (195 aa)). The Nucleophile role is filled by C77. Residues H178 and E180 contribute to the active site.

As to quaternary structure, heterodimer of HisH and HisF.

It is found in the cytoplasm. It catalyses the reaction 5-[(5-phospho-1-deoxy-D-ribulos-1-ylimino)methylamino]-1-(5-phospho-beta-D-ribosyl)imidazole-4-carboxamide + L-glutamine = D-erythro-1-(imidazol-4-yl)glycerol 3-phosphate + 5-amino-1-(5-phospho-beta-D-ribosyl)imidazole-4-carboxamide + L-glutamate + H(+). The enzyme catalyses L-glutamine + H2O = L-glutamate + NH4(+). It functions in the pathway amino-acid biosynthesis; L-histidine biosynthesis; L-histidine from 5-phospho-alpha-D-ribose 1-diphosphate: step 5/9. Functionally, IGPS catalyzes the conversion of PRFAR and glutamine to IGP, AICAR and glutamate. The HisH subunit catalyzes the hydrolysis of glutamine to glutamate and ammonia as part of the synthesis of IGP and AICAR. The resulting ammonia molecule is channeled to the active site of HisF. The chain is Imidazole glycerol phosphate synthase subunit HisH from Bacteroides fragilis (strain ATCC 25285 / DSM 2151 / CCUG 4856 / JCM 11019 / LMG 10263 / NCTC 9343 / Onslow / VPI 2553 / EN-2).